The chain runs to 464 residues: tRNA modification GTPase MnmE (464 aa).

(6S)-5-formyl-5,6,7,8-tetrahydrofolate contacts are provided by Arg-25, Glu-87, and Lys-130. The TrmE-type G domain maps to 226-386 (GLSVVLAGQP…LRAELLRIAG (161 aa)). Position 236 (Asn-236) interacts with K(+). GTP contacts are provided by residues 236-241 (NVGKSS), 255-261 (TPIAGTT), and 280-283 (DTAG). Ser-240 is a Mg(2+) binding site. K(+) is bound by residues Thr-255, Ile-257, and Thr-260. Thr-261 is a Mg(2+) binding site. Lys-464 serves as a coordination point for (6S)-5-formyl-5,6,7,8-tetrahydrofolate.

The protein belongs to the TRAFAC class TrmE-Era-EngA-EngB-Septin-like GTPase superfamily. TrmE GTPase family. Homodimer. Heterotetramer of two MnmE and two MnmG subunits. Requires K(+) as cofactor.

It localises to the cytoplasm. Exhibits a very high intrinsic GTPase hydrolysis rate. Involved in the addition of a carboxymethylaminomethyl (cmnm) group at the wobble position (U34) of certain tRNAs, forming tRNA-cmnm(5)s(2)U34. The chain is tRNA modification GTPase MnmE from Burkholderia lata (strain ATCC 17760 / DSM 23089 / LMG 22485 / NCIMB 9086 / R18194 / 383).